The chain runs to 108 residues: DNA-directed RNA polymerase III subunit RPC10 (108 aa).

Positions 5, 8, 25, 28, 69, and 72 each coordinate Zn(2+). A C4-type zinc finger spans residues 5–28 (CPGCGNGLIVEEGQRCHRFACNTC). The TFIIS-type zinc finger occupies 65–107 (TAESCPKCEHPRAYFMQLQTRSADEPMTTFYKCCNAQCGHRWR). The Hairpin signature appears at 88-89 (DE). The Zn(2+) site is built by Cys98 and Cys102.

The protein belongs to the archaeal RpoM/eukaryotic RPA12/RPB9/RPC11 RNA polymerase family. In terms of assembly, component of the RNA polymerase III complex consisting of 17 subunits: a ten-subunit horseshoe-shaped catalytic core composed of POLR3A/RPC1, POLR3B/RPC2, POLR1C/RPAC1, POLR1D/RPAC2, POLR3K/RPC10, POLR2E/RPABC1, POLR2F/RPABC2, POLR2H/RPABC3, POLR2K/RPABC4 and POLR2L/RPABC5; a mobile stalk composed of two subunits POLR3H/RPC8 and CRCP/RPC9, protruding from the core and functioning primarily in transcription initiation; and additional subunits homologous to general transcription factors of the RNA polymerase II machinery, POLR3C/RPC3-POLR3F/RPC6-POLR3G/RPC7 heterotrimer required for transcription initiation and POLR3D/RPC4-POLR3E/RPC5 heterodimer involved in both transcription initiation and termination.

The protein resides in the nucleus. Core component of RNA polymerase III (Pol III) which synthesizes small non-coding RNAs using the four ribonucleoside triphosphates as substrates. Can mediate Pol I proofreading of the nascent RNA transcript. Anchors into the Pol III active site to constantly monitor transcription fidelity, cleaves mis-incorporated 5'-ribonucleotides and restarts the transcription process. Once Pol III reaches the poly(dT) termination signal, can induce Pol III clamp opening and transcription termination. Pol III plays an important role in sensing and limiting infection by intracellular bacteria and DNA viruses. Acts as a nuclear and cytosolic DNA sensor involved in innate immune response. Can sense non-self dsDNA that serves as template for transcription into dsRNA. The non-self RNA polymerase III transcripts, such as Epstein-Barr virus-encoded RNAs (EBERs) induce type I interferon and NF-kappa-B through the RIG-I pathway. The protein is DNA-directed RNA polymerase III subunit RPC10 of Homo sapiens (Human).